The sequence spans 502 residues: ATP synthase subunit alpha (502 aa).

169 to 176 provides a ligand contact to ATP; that stretch reads GDRQTGKT.

It belongs to the ATPase alpha/beta chains family. F-type ATPases have 2 components, CF(1) - the catalytic core - and CF(0) - the membrane proton channel. CF(1) has five subunits: alpha(3), beta(3), gamma(1), delta(1), epsilon(1). CF(0) has three main subunits: a(1), b(2) and c(9-12). The alpha and beta chains form an alternating ring which encloses part of the gamma chain. CF(1) is attached to CF(0) by a central stalk formed by the gamma and epsilon chains, while a peripheral stalk is formed by the delta and b chains.

The protein localises to the cell membrane. It carries out the reaction ATP + H2O + 4 H(+)(in) = ADP + phosphate + 5 H(+)(out). Its function is as follows. Produces ATP from ADP in the presence of a proton gradient across the membrane. The alpha chain is a regulatory subunit. This is ATP synthase subunit alpha from Bacillus sp. (strain PS3).